Reading from the N-terminus, the 203-residue chain is CASP-like protein 4B2 (203 aa).

Topologically, residues 1-57 are cytoplasmic; sequence MAMVTADASAAADAATKQPDVEKDYSSYNGASTAGAGGGGVVESVVARWRREDMLDK. The chain crosses the membrane as a helical span at residues 58 to 78; sequence CPLALHAAAAAFAFVALVLVA. At 79-92 the chain is on the extracellular side; sequence SNQHGDWMQFDRYQ. The helical transmembrane segment at 93 to 113 threads the bilayer; the sequence is EYMYLLAIAALAFAYSLAQAL. The Cytoplasmic portion of the chain corresponds to 114-135; the sequence is RHAHRMRGGADPIPAPSARLFD. The chain crosses the membrane as a helical span at residues 136-156; sequence FIADQVVAYLLMSALSAAIPI. Residues 157–171 lie on the Extracellular side of the membrane; the sequence is TNRMRTAVINNFTDA. N-linked (GlcNAc...) asparagine glycosylation occurs at asparagine 167. Residues 172 to 192 traverse the membrane as a helical segment; sequence TAAAISMAFLAFVALALSATV. Over 193–203 the chain is Cytoplasmic; sequence SGYKLSRQMYM.

The protein belongs to the Casparian strip membrane proteins (CASP) family. As to quaternary structure, homodimer and heterodimers.

Its subcellular location is the cell membrane. The polypeptide is CASP-like protein 4B2 (Hordeum vulgare subsp. vulgare (Domesticated barley)).